A 688-amino-acid polypeptide reads, in one-letter code: Two-component response regulator ORR23 (688 aa).

The 116-residue stretch at 25–140 (RVLAVDDDPV…ELRNIWQHVI (116 aa)) folds into the Response regulatory domain. A 4-aspartylphosphate modification is found at aspartate 76. Residues 161 to 212 (PPNADSDHVHGHVTCGSPDQSGRPSKKRKEYCSEEEDEGEVNTQDIDDPSAP) are disordered. A compositionally biased stretch (acidic residues) spans 193 to 208 (SEEEDEGEVNTQDIDD). The myb-like GARP DNA-binding region spans 211-270 (APKKPRVVWSVELHRKFVAAVNQLGIDKAVPKRILELMNVEKLTRENVASHLQKYRLYLK).

Belongs to the ARR family. Type-B subfamily. In terms of processing, two-component system major event consists of a His-to-Asp phosphorelay between a sensor histidine kinase (HK) and a response regulator (RR). In plants, the His-to-Asp phosphorelay involves an additional intermediate named Histidine-containing phosphotransfer protein (HPt). This multistep phosphorelay consists of a His-Asp-His-Asp sequential transfer of a phosphate group between first a His and an Asp of the HK protein, followed by the transfer to a conserved His of the HPt protein and finally the transfer to an Asp in the receiver domain of the RR protein.

It localises to the nucleus. Functionally, transcriptional activator that binds specific DNA sequence. Functions as a response regulator involved in His-to-Asp phosphorelay signal transduction system. Phosphorylation of the Asp residue in the receiver domain activates the ability of the protein to promote the transcription of target genes. May directly activate some type-A response regulators in response to cytokinins. The chain is Two-component response regulator ORR23 from Oryza sativa subsp. japonica (Rice).